The sequence spans 361 residues: Replication-associated protein (361 aa).

The disordered stretch occupies residues M1 to E31. Residues S35–F138 enclose the CRESS-DNA virus Rep endonuclease domain. Residues F42 to Y45 carry the RCR-1 motif. The a divalent metal cation site is built by E76, H84, and H86. An RCR-2 motif is present at residues H84 to H86. The For DNA cleavage activity role is filled by Y124. An RCR-3 motif is present at residues Y124–K127. The oligomerization stretch occupies residues S192–Y204. ATP is bound at residue G243 to T250. The tract at residues V266 to P285 is transactivation. Residues K307 to G317 carry the Nuclear localization signal motif.

The protein belongs to the geminiviridae Rep protein family. Homooligomer. Rep binds to repeated DNA motifs (iterons). Forms the O-complex, which is a Rep-DNA complex involved in the initiation of RCR. Part of the C- and V-complexes which are RepA-Rep-DNA complexes involved in the c-sense and v-sense transcription. Mg(2+) is required as a cofactor. It depends on Mn(2+) as a cofactor.

The protein resides in the host nucleus. Functionally, essential for the replication of viral ssDNA. The closed circular ssDNA genome is first converted to a superhelical dsDNA. Rep binds a specific region at the genome origin of replication. It introduces an endonucleolytic nick within the conserved sequence 5'-TAATATTAC-3' in the intergenic region of the genome present in all geminiviruses, thereby initiating the rolling circle replication (RCR). Following cleavage, binds covalently to the 5'-phosphate of DNA as a tyrosyl ester. The cleavage gives rise to a free 3'-OH that serves as a primer for the cellular DNA polymerase. The polymerase synthesizes the (+) strand DNA by rolling circle mechanism. After one round of replication, a Rep-catalyzed nucleotidyl transfer reaction releases a circular single-stranded virus genome, thereby terminating the replication. Displays origin-specific DNA cleavage, nucleotidyl transferase, ATPase and helicase activities. Acts as an inhibitor of C-sense gene transcription. The polypeptide is Replication-associated protein (Avena sativa (Oat)).